A 121-amino-acid chain; its full sequence is Autophagy-related protein 8 (121 aa).

Residue Gly116 is the site of Phosphatidylethanolamine amidated glycine attachment. The propeptide at 117–121 (DFETA) is removed in mature form.

The protein belongs to the ATG8 family. The C-terminal 5 residues are removed to expose Gly-116 at the C-terminus. The C-terminal Gly is then amidated with phosphatidylethanolamine by an activating system similar to that for ubiquitin.

It is found in the cytoplasmic vesicle. The protein localises to the autophagosome membrane. Its subcellular location is the vacuole membrane. Its function is as follows. Ubiquitin-like modifier involved in autophagosome formation. With cpr-1/atg4, mediates the delivery of the autophagosomes to the vacuole via the microtubule cytoskeleton. Required for selective autophagic degradation of the nucleus (nucleophagy) as well as for mitophagy which contributes to regulate mitochondrial quantity and quality by eliminating the mitochondria to a basal level to fulfill cellular energy requirements and preventing excess ROS production. Also participates in membrane fusion events that take place in the early secretory pathway. Also involved in endoplasmic reticulum-specific autophagic process and is essential for the survival of cells subjected to severe ER stress. The apg-6/atg8-PE conjugate mediates tethering between adjacent membranes and stimulates membrane hemifusion, leading to expansion of the autophagosomal membrane during autophagy. The polypeptide is Autophagy-related protein 8 (apg-6) (Neurospora crassa (strain ATCC 24698 / 74-OR23-1A / CBS 708.71 / DSM 1257 / FGSC 987)).